We begin with the raw amino-acid sequence, 169 residues long: Thermonuclease (169 aa).

An N-terminal signal peptide occupies residues 1–26 (MKKITTGLIIVVAAIIVLSIQFMTES). Residues arginine 65, glutamate 73, and arginine 115 contribute to the active site.

This sequence belongs to the thermonuclease family. The cofactor is Ca(2+).

The protein localises to the secreted. It carries out the reaction Endonucleolytic cleavage to nucleoside 3'-phosphates and 3'-phosphooligonucleotide end-products.. Its function is as follows. Enzyme that catalyzes the hydrolysis of both DNA and RNA at the 5'-position of the phosphodiester bond. The chain is Thermonuclease (nucH) from Staphylococcus hyicus.